Consider the following 146-residue polypeptide: Hemoglobin subunit beta (146 aa).

Position 1 is an N-acetylvaline (Val1). Residues 2 to 146 enclose the Globin domain; sequence HLTDGEKNAL…VANALAHKYH (145 aa). The residue at position 44 (Ser44) is a Phosphoserine. The residue at position 59 (Lys59) is an N6-acetyllysine. Residue His63 participates in heme b binding. The residue at position 82 (Lys82) is an N6-acetyllysine. His92 serves as a coordination point for heme b. The residue at position 93 (Cys93) is an S-nitrosocysteine. The residue at position 144 (Lys144) is an N6-acetyllysine.

Belongs to the globin family. Heterotetramer of two alpha chains and two beta chains. In terms of tissue distribution, red blood cells.

In terms of biological role, involved in oxygen transport from the lung to the various peripheral tissues. This Otospermophilus beecheyi (California ground squirrel) protein is Hemoglobin subunit beta.